The chain runs to 277 residues: Shikimate dehydrogenase (NADP(+)) (277 aa).

Shikimate is bound by residues 20-22 (SLS) and Thr67. Catalysis depends on Lys71, which acts as the Proton acceptor. Asp83 lines the NADP(+) pocket. Residues Asn92 and Asp107 each contribute to the shikimate site. Residues 131–135 (GAGGV) and Ile219 contribute to the NADP(+) site. Tyr221 serves as a coordination point for shikimate. Gly242 is a binding site for NADP(+).

The protein belongs to the shikimate dehydrogenase family. In terms of assembly, homodimer.

The enzyme catalyses shikimate + NADP(+) = 3-dehydroshikimate + NADPH + H(+). It participates in metabolic intermediate biosynthesis; chorismate biosynthesis; chorismate from D-erythrose 4-phosphate and phosphoenolpyruvate: step 4/7. Functionally, involved in the biosynthesis of the chorismate, which leads to the biosynthesis of aromatic amino acids. Catalyzes the reversible NADPH linked reduction of 3-dehydroshikimate (DHSA) to yield shikimate (SA). This is Shikimate dehydrogenase (NADP(+)) from Pelobacter propionicus (strain DSM 2379 / NBRC 103807 / OttBd1).